Reading from the N-terminus, the 373-residue chain is Protein-glutamate methylesterase/protein-glutamine glutaminase 1 (373 aa).

A Response regulatory domain is found at 16 to 133; the sequence is RVVVVDDSAL…ASGLTELSDQ (118 aa). Asp67 carries the 4-aspartylphosphate modification. Positions 175-367 constitute a CheB-type methylesterase domain; that stretch reads RVSTEKLICI…PALIAKLSSA (193 aa). Active-site residues include Ser187, His213, and Asp309.

It belongs to the CheB family. Phosphorylated by CheA. Phosphorylation of the N-terminal regulatory domain activates the methylesterase activity.

Its subcellular location is the cytoplasm. The enzyme catalyses [protein]-L-glutamate 5-O-methyl ester + H2O = L-glutamyl-[protein] + methanol + H(+). It catalyses the reaction L-glutaminyl-[protein] + H2O = L-glutamyl-[protein] + NH4(+). Its function is as follows. Involved in chemotaxis. Part of a chemotaxis signal transduction system that modulates chemotaxis in response to various stimuli. Catalyzes the demethylation of specific methylglutamate residues introduced into the chemoreceptors (methyl-accepting chemotaxis proteins or MCP) by CheR. Also mediates the irreversible deamidation of specific glutamine residues to glutamic acid. This chain is Protein-glutamate methylesterase/protein-glutamine glutaminase 1, found in Albidiferax ferrireducens (strain ATCC BAA-621 / DSM 15236 / T118) (Rhodoferax ferrireducens).